We begin with the raw amino-acid sequence, 92 residues long: Small ribosomal subunit protein bS20 (92 aa).

The segment at 1-23 is disordered; it reads MANTPSAKKRAKQAEKRRSHNAS. Over residues 7-20 the composition is skewed to basic residues; it reads AKKRAKQAEKRRSH.

The protein belongs to the bacterial ribosomal protein bS20 family.

Binds directly to 16S ribosomal RNA. The protein is Small ribosomal subunit protein bS20 of Pseudomonas fluorescens (strain SBW25).